A 708-amino-acid polypeptide reads, in one-letter code: Polyribonucleotide nucleotidyltransferase (708 aa).

2 residues coordinate Mg(2+): aspartate 486 and aspartate 492. The 60-residue stretch at 553-612 (PRITTIKVPPQKVREVIGSGGKVIREITEVTGTKIDIEDDGTIKIASADAEATQRAVDWI) folds into the KH domain. The S1 motif domain maps to 622–690 (GVVYTGKVVK…DRGKIKLSMK (69 aa)).

Belongs to the polyribonucleotide nucleotidyltransferase family. Mg(2+) serves as cofactor.

The protein resides in the cytoplasm. It catalyses the reaction RNA(n+1) + phosphate = RNA(n) + a ribonucleoside 5'-diphosphate. Its function is as follows. Involved in mRNA degradation. Catalyzes the phosphorolysis of single-stranded polyribonucleotides processively in the 3'- to 5'-direction. The chain is Polyribonucleotide nucleotidyltransferase from Rhodospirillum rubrum (strain ATCC 11170 / ATH 1.1.1 / DSM 467 / LMG 4362 / NCIMB 8255 / S1).